Reading from the N-terminus, the 86-residue chain is RNA-binding protein Hfq (86 aa).

Residues 9 to 68 (DPYLNTLRKEKVPVSIYLVNGIKLQGSIESFDQFVVLLKNTVSQMVYKHAISTVVPARPV) form the Sm domain. The segment at 67-86 (PVRLPSPTDGEHGDSEPGNA) is disordered. Basic and acidic residues predominate over residues 75 to 86 (DGEHGDSEPGNA).

This sequence belongs to the Hfq family. Homohexamer.

Functionally, RNA chaperone that binds small regulatory RNA (sRNAs) and mRNAs to facilitate mRNA translational regulation in response to envelope stress, environmental stress and changes in metabolite concentrations. Also binds with high specificity to tRNAs. This Pseudomonas putida (strain GB-1) protein is RNA-binding protein Hfq.